The chain runs to 760 residues: Phosphatidylinositol N-acetylglucosaminyltransferase subunit Q (760 aa).

5 helical membrane passes run 278–298, 349–371, 378–400, 446–468, and 475–497; these read TVASVLLDVALGLMLLSWLHG, LYHIHLWISYIHLMSPFVEHILW, CLGLTVALSLLSDIIALLTFHIY, LFIGTLLFTILLFLLPTTALYYL, and LLVVAVQGLIHLLVDLINSLPLY. The tract at residues 696–748 is disordered; that stretch reads LAVGVEGPCQDEPPSPRHPLAPSAEQHPASGGLKQSLTPVPSGPGPSLPEPHG.

Belongs to the PIGQ family. Component of the glycosylphosphatidylinositol-N-acetylglucosaminyltransferase (GPI-GnT) complex composed at least by PIGA, PIGC, PIGH, PIGP, PIGQ, PIGY and DPM2. Interacts with PIGA, PIGH and PIGC.

It is found in the membrane. The protein operates within glycolipid biosynthesis; glycosylphosphatidylinositol-anchor biosynthesis. In terms of biological role, part of the glycosylphosphatidylinositol-N-acetylglucosaminyltransferase (GPI-GnT) complex that catalyzes the transfer of N-acetylglucosamine from UDP-N-acetylglucosamine to phosphatidylinositol and participates in the first step of GPI biosynthesis. The sequence is that of Phosphatidylinositol N-acetylglucosaminyltransferase subunit Q from Homo sapiens (Human).